Reading from the N-terminus, the 611-residue chain is Dehydrogenase pkfF (611 aa).

The first 19 residues, 1–19 (MRHTALLPLVSSFIVPALA), serve as a signal peptide directing secretion. N-linked (GlcNAc...) asparagine glycans are attached at residues N28 and N38. FAD contacts are provided by residues 50-51 (TS), 71-72 (EA), and 137-140 (HYMV). 6 N-linked (GlcNAc...) asparagine glycosylation sites follow: N180, N187, N240, N272, N409, and N471. Residue H547 is the Proton acceptor of the active site. FAD contacts are provided by residues A581 and 592-593 (PQ).

The protein belongs to the GMC oxidoreductase family. It depends on FAD as a cofactor.

It functions in the pathway secondary metabolite biosynthesis. Functionally, dehydrogenase; part of the gene cluster that mediates the biosynthesis of aspernidine A, a prenylated isoindolinone. The starting point of the biosynthesis of aspernidin A is the production of orsellinaldehyde by the non-reducing polyketide synthase pkfA. Hydroxylation, methylation of one of the phenol groups, and prenylation, presumably catalyzed by the prenyltransferase pkfE, would be needed to yield aspernidine D. Subsequently, the cytochrome P450 monooxygenase pkfB is responsible for hydroxylation of aspernidine D to yield aspernidine E. The dehydrogenase pkfF may be responsible for further oxidation of aspernidine E to form a dialdehyde intermediate which is further transformed in a series of steps, some of which are enzyme-mediated, to generate aspernidine A. The possibility that additional enzymes outside of the cluster are involved in aspernidine A biosynthesis cannot be excluded. The polypeptide is Dehydrogenase pkfF (Emericella nidulans (strain FGSC A4 / ATCC 38163 / CBS 112.46 / NRRL 194 / M139) (Aspergillus nidulans)).